Here is a 946-residue protein sequence, read N- to C-terminus: Leucine--tRNA ligase (946 aa).

Residues 40 to 51 (PYPSGAGLHVGH) carry the 'HIGH' region motif. The 'KMSKS' region motif lies at 719 to 723 (KMSKS). Lys722 contributes to the ATP binding site.

This sequence belongs to the class-I aminoacyl-tRNA synthetase family.

The protein localises to the cytoplasm. The enzyme catalyses tRNA(Leu) + L-leucine + ATP = L-leucyl-tRNA(Leu) + AMP + diphosphate. In Parabacteroides distasonis (strain ATCC 8503 / DSM 20701 / CIP 104284 / JCM 5825 / NCTC 11152), this protein is Leucine--tRNA ligase.